The primary structure comprises 173 residues: Membrane-bound hydrogenase subunit beta (173 aa).

Belongs to the complex I 30 kDa subunit family. As to quaternary structure, the membrane-bound hydrogenase complex is composed of MbhK and MbhL, and may also contain MbhJ. It depends on Ni(2+) as a cofactor.

The protein localises to the cell membrane. It carries out the reaction H2 + 2 oxidized [2Fe-2S]-[ferredoxin] = 2 reduced [2Fe-2S]-[ferredoxin] + 2 H(+). Inhibited by 0.1 mM Cu(2+). Functionally, beta subunit of a hydrogen-evolving hydrogenase that utilizes protons both as a substrate for hydrogen production and proton translocation. Acts by coupling the redox reaction via ferredoxin and iron-sulfur (Fe-S) clusters to proton translocation across the membrane thereby conserving the redox energy in a proton gradient. The sequence is that of Membrane-bound hydrogenase subunit beta from Pyrococcus furiosus (strain ATCC 43587 / DSM 3638 / JCM 8422 / Vc1).